Here is a 3750-residue protein sequence, read N- to C-terminus: MEGAARSRLLLCWTLLAIITDTWPIAEGFVNSPKIISKDGNLIFESGANRNISFRLSGNSRLTINEELDVMELLLATSGSKKRSGGKDDDFVDARELADQLADFNRRAFGANGLSAMLRVQQNRTRGSMALLRRFQTRLRALENRVDRMKTDLEANSCASGPCENGGTCYNTYTGFRCQCRSAFEGTKCEMDVNECALYEGTDLGCQNGGQCQNHFGTYSCLCQPGWHGMHCTQRKADCSQSSAWELCGHGSCVPSADDAGYRCICEPGWKTNGLTPICGEDVDECSDSAAHKPCSTSCINLPGSFTCAPCPAGLTGNGVSCRDLDECQTNNGGCSLSPKVDCINTYGSYHCGECPVGWTGDGRKCERSPQDIDIPAGQTPRTCPAGNNPCYPTASCFLISGTTSCRCPMGMVGTGYGPNGCVNGTTTNCKENPCLNGGICLFAGPSNYTCLCPIGFRPPICEPQPSPCDQHPCKNGGRCRPTTSGDLFVCQCLPGYRGRLCETRFSSCNGMLSAQSGRLRYPPEGTGYEHNAQCAWVIRTNESLVVNVTFNSFDVEDSTECRFDWLQINDGRSAAAQIIGRYCGNHLPHGGNIVSSGNQLYLWFRSDNSTAKEGFDLTWNSMEPQCGGRLNFETHGTLASPGSPGNYPKNRDCRWQLVAPTTKRIKLTFFSLQLEQHANCNFDYVLIKDSISGRELAKYCTTGAPAPLLLPTHLAEIHFHSDAEGSDTGFQLHYSVEERVPGCGGVYTAKEGTISESSTANTEPGGVSCEYEIHLAVGEQVVIQFARLELDPLDCLEVLDITDEGGSILQEKICGSDASRLNPPTFTSEFNRLKIKFYARAGSFQLNYRMACDYKLNNEQGTITSPGYPNLTRSDRICTYTISTATNTVISLKRIDFQLTNGESDDDDNDECLTTNLRINDGLNRKILGPYCGKNQPEENFVSETNYLQLHLSTDVDSMGRGFKFEYRALATGNDKCGGVHTRSGDHIRLPVHDDSYAGEATCYWVIMAPANKAIRLHWNSFSLENAVDCIYDYLEIYDSLGAQVNDERSKPLAKYCGNSVPEDLLSHSRQLVLKFVSDYSESDGGFDLTYTFEDRAKCGGHIHASSGELTSPEYPANYSAGLDCDWHLTGTIDHLLEIQVENFELEQSPNCSADYLEVRNGGGTDSPLIGRFCGRDIPARIPGFSHEMRLILHTDSAINGRGFRLRWRIFAFGCGGSLRSNMGAISSPRYPNSYPNMAHCEWRISLHPGSGISLLIEDLELEGLSNCYYDSVKIYTGIKLPNQSPCKVLCKDDDLHNPLIQLENNKGTIVFDSDASNTFRGFRISYKANCIRNLTATTGTIESLNYMEPFWETIPINCSWTIRAPKGNRVLVEVSHLARHEQHVPTATMPGGLYIVDGRNVQEIVTPQAMNISGEVLTVVHNASNVNFQLDYRIDGCMEELRGTFGFFQSPNYPKMYPNNLECYWLITVEQDSAIELTINNIDLEDSPNCTKDALTVSNHKNSVEVHERHCGSTTKLVITSSGHRLHVRFISDNSHNGLGFEATYRTVKATCGGKLTARNGVIESPNYPLNYPAHSRCEWQVEVSQHHQIVFEMADLNLESGYDCNWDYLEAYDLTEDDTEGERLFKVCGDETEDDKLLSSSSNMAVVRFISDDSVSKKGFRLHFHESCGQTIIVDETMFDYIQMSRQAARNESCLWVFQAVEPNKRIIFTPTHVKLREDANQQYPTEGDCLNVGVKIYEGTEPQGTPRLKFCRSHPPALISNGQALTVSVPLQLVEEFQGHYMTMDTSCGSIYNALSGKFTSPYYPASYPPNIECLWLLEASMGNSLSLTLESMDLEKSESCNRDYLEVREESESGQLIGVYCGNEVPGVIHSRGAIWMKFKSDDDNVGEGFMASYNYEHHNELNGTEGTIESPHFPSKFQDPVPYSWRITVDKEYVVAISLLYLRDLDQPHLNFYDGYSDIGARIEVTDPDETIISSTNVVYFTSNRGPFKLNWNRLSKEALRSNRTAEERTRQCGNQLITIDRSVIGFHSPGYPNGYEQDLNCFWTLVPSNPAMHAVLTLSQIDLEIFSEDCIADYVKIFSGSDLQNWSELRTLCSLPTESSDRVFHGRPYLRVEFVTDPSVNKTGFNGIVRTACGSEITASKGLVNITEILKVLPRPNHDCVWTIKVRQGRRIKIDFPDFQLQNNMASGSSDCRNYLLLRNGNDEDSPFLGRGKYCEDVVHEVLNTSSNKAYIKFHFASPPRFLVSFRFEELRYTDSGRIRLSASGDEQFISSPYYPHLPHPHSECIWIVEAPPEHRIMLHFQGAFDMLDATGEPEECQREFVLINDGSTELRPEIGRYCGNRKPDTIYSTGNQMRIRYFTDVSEPHMGFNASLSVARCGGSFHSPEGVIASPSRDLLLIHEEGKQLQECVYTIELEKGSTIDLTSEYLQIPTLRNGSCSQRNHLMLEEMDAFGLDGEEKIVDTLMLCGMEAKHLISETNKIVFRYRFLDGIPAENQGFRLKYTSLGSRCGETIYASVGVLQTPGYPLGVPHPMHCKWQVQVPKGRRVRLEILDFNTGTNMDLRGRLGFRGRLTVANDFKMQSILGRYNVDPPAEVLSSDNTMGIDAFLLPIVQNHGIKLRFSAYGSSSCPGFTVMMNEVADIQFQRFNISRPLHCSYKVVPPSNSTLLIRVKEYNTTSVMMWNTHMCALLSPLKFNRLEQEEELMERILCDYQSPAPGKPLPSIRLPFPIQLVVSASARNAMTNLVLSYSTQSCGGVIILEPGDNMTVHQPSGMVSAAGAIDCAWAIGPYTDASGEDEVLVPQDIQLEVSVYNVNLPAPSPSAQSPEAPCLHHYLKVYNGPDQNSPSLGLFCNQATAVNMVVERGLFLEYHSDSFSANATFNVSIKYGSGCGGKLVYPYRAIDFAEQYKNNVECIWEVEATMGYHIGLTFQGRFYIEDSPGCTKDYLLVQQRNETTGNWTDLQRICGRVAPEMINTTSPYLRLIFRSDGDVVADGFLAKFERNCGGLLYADSTEQELASPGFPNGYEKYLQCNWTIVPRSPSMGGVLVSFVNFDLEQGPISVCLYDNLTVTTKDKGKDPQQTTLCGVKHNHEYRGKEYVNLLLRTDGSYSGRGFTLLYTSRLCGGIISRTSMVESPVQHTDNTLPPGSDCYWNLTAPAGYKFNIKFLFIDFEANSNCAYDGVEVFSGPIPDERYRWGRFCGRINEDLPLISIPQERGIIHSFSDDRDPSRGFRALVRVMPNCDEKISLNGSSRYVYSKFNNAGGYQNDLDCQIVFRVNPDQQISVEFSNFHVQDTDGCRSDYVELRDGGGTFADIIGRFCGQNQPPTLRTTRHTLYMRFVTDNKVTDTGFQVTINAIPRLCGSSEITLSADGTKEVTINSPARTPGGNYPNGVSCFWKIKGDSLLRVQFVNFDLHGPNQNGSCVDDYLKIYNSEDAPLLEQGLGTDLVFNGQTSSKNGFGFATEHVYCGNVKPDIYYGRSSEVYLKFRSKGLEQHGGFQLQVALNSNRERHYDGLQGRVHLSQSADCNIIIRAPPNYTLSLYYTELIFGTYDCEMENLEVFDRTNRSLQRVCSFVDMGKSLFSNANELRLQMKTGSYLTSLDLTYLASPVEKGPGCGGQFYNTEGIFSNPFYPNNVRNNSECQWIVRVPSNNVVFLTFEVFNLGSKTTCHTDYLQILEQDATGEEREMRRFCGEDNPKYYKSRRSQVLVRFHKTVNYDGIGWVIRFAGVYSDHQIPRHLLGGS.

A signal peptide spans 1-28 (MEGAARSRLLLCWTLLAIITDTWPIAEG). 2 N-linked (GlcNAc...) asparagine glycosylation sites follow: Asn51 and Asn123. Residues 154–190 (EANSCASGPCENGGTCYNTYTGFRCQCRSAFEGTKCE) enclose the EGF-like 1 domain. 6 disulfide bridges follow: Cys158-Cys169, Cys163-Cys178, Cys180-Cys189, Cys196-Cys212, Cys206-Cys221, and Cys223-Cys232. Positions 192–233 (DVNECALYEGTDLGCQNGGQCQNHFGTYSCLCQPGWHGMHCT) constitute an EGF-like 2; calcium-binding domain. The 27-residue stretch at 282–308 (DVDECSDSAAHKPCSTSCINLPGSFTC) folds into the EGF-like 3; calcium-binding domain. Residues 324–352 (DLDECQTNNGGCSLSPKVDCINTYGSYHC) enclose the EGF-like 4; calcium-binding domain. The N-linked (GlcNAc...) asparagine glycan is linked to Asn424. 2 EGF-like domains span residues 426-463 (TTTN…PICE) and 465-503 (QPSP…RLCE). Cystine bridges form between Cys430-Cys441, Cys435-Cys451, Cys453-Cys462, Cys469-Cys480, Cys474-Cys491, Cys493-Cys502, and Cys509-Cys535. Asn448 carries an N-linked (GlcNAc...) asparagine glycan. 13 consecutive CUB domains span residues 509–623 (CNGM…WNSM), 627–738 (CGGR…YSVE), 744–852 (CGGV…YRMA), 853–971 (CDYK…YRAL), 978–1095 (CGGV…YTFE), 1100–1212 (CGGH…WRIF), 1216–1331 (CGGS…YKAN), 1332–1434 (CIRN…QLDY), 1439–1550 (CMEE…YRTV), 1554–1670 (CGGK…FHES), 1671–1788 (CGQT…YMTM), 1792–1902 (CGSI…YNYE), and 1903–2001 (HHNE…WNRL). N-linked (GlcNAc...) asparagine glycosylation is found at Asn542 and Asn548. Cys562 and Cys584 are oxidised to a cystine. An N-linked (GlcNAc...) asparagine glycan is attached at Asn609. Intrachain disulfides connect Cys627-Cys654, Cys681-Cys701, Cys744-Cys770, Cys853-Cys879, Cys913-Cys933, and Cys978-Cys1004. Residue Asn871 is glycosylated (N-linked (GlcNAc...) asparagine). Residues Glu1026, Asp1034, and Asp1080 each contribute to the Ca(2+) site. Cysteines 1031 and 1058 form a disulfide. A disulfide bond links Cys1100 and Cys1126. A glycan (N-linked (GlcNAc...) asparagine) is linked at Asn1119. Glu1148 contributes to the Ca(2+) binding site. Asn1152 carries an N-linked (GlcNAc...) asparagine glycan. Cys1153 and Cys1175 are joined by a disulfide. Residues Asp1156 and Asp1197 each coordinate Ca(2+). An intrachain disulfide couples Cys1216 to Cys1242. Residues Glu1264, Asp1272, and Asp1316 each coordinate Ca(2+). A disulfide bridge links Cys1269 with Cys1292. Cys1332 and Cys1360 are oxidised to a cystine. 4 N-linked (GlcNAc...) asparagine glycosylation sites follow: Asn1335, Asn1359, Asn1413, and Asn1424. A disulfide bond links Cys1439 and Cys1465. Asn1491 is a glycosylation site (N-linked (GlcNAc...) asparagine). Cystine bridges form between Cys1492-Cys1513, Cys1554-Cys1580, Cys1607-Cys1631, Cys1671-Cys1697, Cys1733-Cys1755, Cys1792-Cys1818, and Cys1845-Cys1866. Residue Asn1694 is glycosylated (N-linked (GlcNAc...) asparagine). N-linked (GlcNAc...) asparagine glycans are attached at residues Asn1908 and Asn2009. 2 disulfides stabilise this stretch: Cys2019-Cys2048 and Cys2077-Cys2100. 5 CUB domains span residues 2019-2139 (CGNQ…VRTA), 2140-2256 (CGSE…FRFE), 2262-2383 (DSGR…LSVA), 2385-2512 (CGGS…YTSL), and 2516-2646 (CGET…MNEV). Residues Asn2092, Asn2128, Asn2152, and Asn2231 are each glycosylated (N-linked (GlcNAc...) asparagine). An intrachain disulfide couples Cys2140 to Cys2167. A disulfide bond links Cys2324 and Cys2346. Asn2377 carries an N-linked (GlcNAc...) asparagine glycan. Cys2385 and Cys2416 are oxidised to a cystine. Asn2442 is a glycosylation site (N-linked (GlcNAc...) asparagine). Intrachain disulfides connect Cys2445–Cys2474 and Cys2516–Cys2542. Asn2655, Asn2671, Asn2682, and Asn2772 each carry an N-linked (GlcNAc...) asparagine glycan. Disulfide bonds link Cys2761/Cys2790 and Cys2837/Cys2859. CUB domains are found at residues 2761–2895 (CGGV…IKYG), 2898–3010 (CGGK…FERN), 3011–3128 (CGGL…YTSR), 3130–3246 (CGGI…VRVM), 3249–3364 (CDEK…INAI), 3368–3512 (CGSS…VALN), 3522–3615 (LQGR…YLAS), and 3623–3736 (CGGQ…FAGV). Residues Asn2885 and Asn2889 are each glycosylated (N-linked (GlcNAc...) asparagine). Cystine bridges form between Cys2898–Cys2921 and Cys2949–Cys2973. 3 N-linked (GlcNAc...) asparagine glycosylation sites follow: Asn2960, Asn2965, and Asn2982. Cys3011 and Cys3039 form a disulfide bridge. 2 N-linked (GlcNAc...) asparagine glycosylation sites follow: Asn3040 and Asn3074. 2 disulfides stabilise this stretch: Cys3070–Cys3092 and Cys3130–Cys3157. Asn3160 carries an N-linked (GlcNAc...) asparagine glycan. 4 cysteine pairs are disulfide-bonded: Cys3184-Cys3207, Cys3249-Cys3278, Cys3305-Cys3327, and Cys3368-Cys3402. A glycan (N-linked (GlcNAc...) asparagine) is linked at Asn3256. Asn3427 carries an N-linked (GlcNAc...) asparagine glycan. A disulfide bridge connects residues Cys3430 and Cys3475. N-linked (GlcNAc...) asparagine glycosylation is found at Asn3543, Asn3572, and Asn3645. Intrachain disulfides connect Cys3560–Cys3579, Cys3623–Cys3649, and Cys3676–Cys3699.

Specifically expressed in nephrocytes.

It is found in the cell membrane. Functionally, required in the nephrocyte for normal uptake of proteins and elimination of toxins, and for maintenance of endocytic trafficking structures. May function together with Amnionless. The sequence is that of Cubilin homolog from Drosophila melanogaster (Fruit fly).